A 299-amino-acid polypeptide reads, in one-letter code: Elongation factor Ts, mitochondrial (299 aa).

A mitochondrion-targeting transit peptide spans 1–18; it reads MLFQRRLHFHQFFGKTRV.

It belongs to the EF-Ts family.

The protein resides in the mitochondrion. In terms of biological role, associates with the EF-Tu.GDP complex and induces the exchange of GDP to GTP. It remains bound to the aminoacyl-tRNA.EF-Tu.GTP complex up to the GTP hydrolysis stage on the ribosome. This chain is Elongation factor Ts, mitochondrial (tsf1), found in Schizosaccharomyces pombe (strain 972 / ATCC 24843) (Fission yeast).